Here is an 838-residue protein sequence, read N- to C-terminus: Envelope glycoprotein H (838 aa).

The N-terminal stretch at Met-1 to Gly-18 is a signal peptide. Topologically, residues Thr-21–Pro-803 are virion surface. N-linked (GlcNAc...) asparagine; by host glycans are attached at residues Asn-73 and Asn-120. Positions Gly-171 to Arg-190 are enriched in basic and acidic residues. Positions Gly-171 to Thr-207 are disordered. Asn-208 and Asn-216 each carry an N-linked (GlcNAc...) asparagine; by host glycan. The cysteines at positions 258 and 429 are disulfide-linked. Positions Asp-259–Val-323 are interaction with gL. Asn-332, Asn-437, Asn-670, and Asn-784 each carry an N-linked (GlcNAc...) asparagine; by host glycan. Residues Gly-804 to Leu-824 traverse the membrane as a helical segment. Over Arg-825–Glu-838 the chain is Intravirion.

The protein belongs to the herpesviridae glycoprotein H family. Interacts with glycoprotein L (gL); this interaction is necessary for the correct processing and cell surface expression of gH. The heterodimer gH/gL seems to interact with gB trimers during fusion. Interacts with host integrins ITGAV/ITGB3 to mediate viral entry into epithelial cells. In terms of processing, N-glycosylated, O-glycosylated, and sialylated.

The protein resides in the virion membrane. Its subcellular location is the host cell membrane. The protein localises to the host endosome membrane. In terms of biological role, the heterodimer glycoprotein H-glycoprotein L is required for the fusion of viral and plasma membranes leading to virus entry into the host cell. Following initial binding to host receptor, membrane fusion is mediated by the fusion machinery composed of gB and the heterodimer gH/gL. May also be involved in the fusion between the virion envelope and the outer nuclear membrane during virion morphogenesis. Interaction with host integrins ITGAV/ITGB3 triggers release of cytosolic Ca(2+) and FAK phosphorylation leading to efficient viral entry into host genital tract epithelial cells. The chain is Envelope glycoprotein H from Human herpesvirus 2 (strain HG52) (HHV-2).